Reading from the N-terminus, the 277-residue chain is Putative phosphoenolpyruvate synthase regulatory protein (277 aa).

Residue 157–164 (GVSRCGKT) participates in ADP binding.

This sequence belongs to the pyruvate, phosphate/water dikinase regulatory protein family. PSRP subfamily.

The enzyme catalyses [pyruvate, water dikinase] + ADP = [pyruvate, water dikinase]-phosphate + AMP + H(+). The catalysed reaction is [pyruvate, water dikinase]-phosphate + phosphate + H(+) = [pyruvate, water dikinase] + diphosphate. Bifunctional serine/threonine kinase and phosphorylase involved in the regulation of the phosphoenolpyruvate synthase (PEPS) by catalyzing its phosphorylation/dephosphorylation. This is Putative phosphoenolpyruvate synthase regulatory protein from Klebsiella pneumoniae (strain 342).